The chain runs to 261 residues: Ribosomal RNA small subunit methyltransferase J (261 aa).

S-adenosyl-L-methionine is bound by residues 109–110 (RD), 125–126 (ER), and aspartate 179.

It belongs to the methyltransferase superfamily. RsmJ family.

Its subcellular location is the cytoplasm. It catalyses the reaction guanosine(1516) in 16S rRNA + S-adenosyl-L-methionine = N(2)-methylguanosine(1516) in 16S rRNA + S-adenosyl-L-homocysteine + H(+). Functionally, specifically methylates the guanosine in position 1516 of 16S rRNA. The protein is Ribosomal RNA small subunit methyltransferase J of Pseudomonas aeruginosa (strain LESB58).